The sequence spans 202 residues: Transmembrane protein 223 (202 aa).

Over 1 to 43 (MAAPGRRWSVLLFRALQSLSARRALHDTAPPRDVLLFEHERGR) the chain is Mitochondrial matrix. A helical transmembrane segment spans residues 44–64 (FFAVLGLFCAGQGVFWASLAI). Residues 65 to 97 (ASLARPPTPVRPTDAKTPDHGGLDLRSTLWRYG) are Mitochondrial intermembrane-facing. A helical transmembrane segment spans residues 98 to 118 (LAVGCGAIGSLVLGAGLLFSL). Over 119–202 (RSVRSVMLRA…DNTVGAYRSL (84 aa)) the chain is Mitochondrial matrix.

It belongs to the TMEM223 family. In terms of assembly, associates with the mitochondrial ribosome.

It is found in the mitochondrion inner membrane. Mitochondrial ribosome-associated protein involved in the first steps of cytochrome c oxidase complex (complex IV) biogenesis. Stimulates the translation of MT-CO1 mRNA and is a constituent of early MT-CO1 assembly intermediates. The polypeptide is Transmembrane protein 223 (Bos taurus (Bovine)).